The sequence spans 647 residues: DNA mismatch repair protein MutL (647 aa).

The tract at residues 377-396 (EEPQAVKQSAQLWQPPKQEW) is disordered. A compositionally biased stretch (low complexity) spans 387–396 (QLWQPPKQEW).

Belongs to the DNA mismatch repair MutL/HexB family.

In terms of biological role, this protein is involved in the repair of mismatches in DNA. It is required for dam-dependent methyl-directed DNA mismatch repair. May act as a 'molecular matchmaker', a protein that promotes the formation of a stable complex between two or more DNA-binding proteins in an ATP-dependent manner without itself being part of a final effector complex. In Bacillus cereus (strain AH187), this protein is DNA mismatch repair protein MutL.